Reading from the N-terminus, the 504-residue chain is Calcium/calmodulin-dependent protein kinase type II (504 aa).

The Protein kinase domain maps to 65–351; the sequence is YQLIENLGDG…IHQFFQHPWI (287 aa). ATP is bound by residues 71 to 79 and Lys-94; that span reads LGDGAFSQV. The active-site Proton acceptor is the Asp-188. Position 252 is a phosphothreonine (Thr-252).

This sequence belongs to the protein kinase superfamily. CAMK Ser/Thr protein kinase family. CaMK subfamily. Interacts with sty1. It depends on Mg(2+) as a cofactor. Autophosphorylated.

It is found in the cytoplasm. The protein localises to the barrier septum. It localises to the forespore membrane. Its subcellular location is the ascus epiplasm. It catalyses the reaction L-seryl-[protein] + ATP = O-phospho-L-seryl-[protein] + ADP + H(+). The enzyme catalyses L-threonyl-[protein] + ATP = O-phospho-L-threonyl-[protein] + ADP + H(+). Its function is as follows. Has a role in the regulation of G2/M transition during the mitotic cell cycle. The protein is Calcium/calmodulin-dependent protein kinase type II of Schizosaccharomyces pombe (strain 972 / ATCC 24843) (Fission yeast).